Here is a 1405-residue protein sequence, read N- to C-terminus: DNA-directed RNA polymerase III subunit rpc1 (1405 aa).

Zn(2+) contacts are provided by Cys-66, Cys-69, Cys-76, His-79, Cys-106, Cys-109, and Cys-153. Mg(2+) is bound by residues Asp-493, Asp-495, and Asp-497. Residues 838–850 (PTEFLFHAISGRE) form a bridging helix region.

This sequence belongs to the RNA polymerase beta' chain family. Component of the RNA polymerase III (Pol III) complex consisting of 17 subunits.

The protein resides in the nucleus. The catalysed reaction is RNA(n) + a ribonucleoside 5'-triphosphate = RNA(n+1) + diphosphate. Functionally, DNA-dependent RNA polymerase catalyzes the transcription of DNA into RNA using the four ribonucleoside triphosphates as substrates. Largest and catalytic core component of RNA polymerase III which synthesizes small RNAs, such as 5S rRNA and tRNAs. Forms the polymerase active center together with the second largest subunit. A single-stranded DNA template strand of the promoter is positioned within the central active site cleft of Pol III. A bridging helix emanates from RPC1 and crosses the cleft near the catalytic site and is thought to promote translocation of Pol III by acting as a ratchet that moves the RNA-DNA hybrid through the active site by switching from straight to bent conformations at each step of nucleotide addition. The chain is DNA-directed RNA polymerase III subunit rpc1 (rpc1) from Schizosaccharomyces pombe (strain 972 / ATCC 24843) (Fission yeast).